The following is a 183-amino-acid chain: A-type ATP synthase subunit E (183 aa).

Belongs to the V-ATPase E subunit family. Has multiple subunits with at least A(3), B(3), C, D, E, F, H, I and proteolipid K(x).

The protein localises to the cell membrane. In terms of biological role, component of the A-type ATP synthase that produces ATP from ADP in the presence of a proton gradient across the membrane. This chain is A-type ATP synthase subunit E, found in Methanosarcina acetivorans (strain ATCC 35395 / DSM 2834 / JCM 12185 / C2A).